The sequence spans 332 residues: 2,3-bisphosphoglycerate-dependent phosphoglycerate mutase 2 (332 aa).

The transit peptide at Met1–Thr48 directs the protein to the chloroplast. Substrate-binding positions include Arg85–Asn92, Thr98–Gly99, Arg135, Glu189–Tyr192, Lys200, Arg216–Arg217, and Gly260–Asn261. The Tele-phosphohistidine intermediate role is filled by His86. Glu189 functions as the Proton donor/acceptor in the catalytic mechanism.

It belongs to the phosphoglycerate mutase family. BPG-dependent PGAM subfamily.

It is found in the plastid. The protein localises to the chloroplast. It catalyses the reaction (2R)-2-phosphoglycerate = (2R)-3-phosphoglycerate. The protein operates within carbohydrate degradation; glycolysis; pyruvate from D-glyceraldehyde 3-phosphate: step 3/5. Its function is as follows. Catalyzes the interconversion of 2-phosphoglycerate and 3-phosphoglycerate. This Arabidopsis thaliana (Mouse-ear cress) protein is 2,3-bisphosphoglycerate-dependent phosphoglycerate mutase 2.